A 179-amino-acid chain; its full sequence is Cytochrome b6-f complex iron-sulfur subunit 1 (179 aa).

Residues 21 to 43 (LLTFGTVTGVALGALYPVVNYFI) form a helical membrane-spanning segment. The 102-residue stretch at 61-162 (GNDVSVSKFL…AKTENDKIVL (102 aa)) folds into the Rieske domain. C108, H110, C126, and H129 together coordinate [2Fe-2S] cluster. Residues C113 and C128 are joined by a disulfide bond.

It belongs to the Rieske iron-sulfur protein family. The 4 large subunits of the cytochrome b6-f complex are cytochrome b6, subunit IV (17 kDa polypeptide, PetD), cytochrome f and the Rieske protein, while the 4 small subunits are PetG, PetL, PetM and PetN. The complex functions as a dimer. The cofactor is [2Fe-2S] cluster.

It is found in the cellular thylakoid membrane. The enzyme catalyses 2 oxidized [plastocyanin] + a plastoquinol + 2 H(+)(in) = 2 reduced [plastocyanin] + a plastoquinone + 4 H(+)(out). Functionally, component of the cytochrome b6-f complex, which mediates electron transfer between photosystem II (PSII) and photosystem I (PSI), cyclic electron flow around PSI, and state transitions. This Trichormus variabilis (strain ATCC 29413 / PCC 7937) (Anabaena variabilis) protein is Cytochrome b6-f complex iron-sulfur subunit 1.